The sequence spans 153 residues: Superoxide dismutase [Cu-Zn] (153 aa).

Asn-24 carries an N-linked (GlcNAc...) asparagine glycan. His-47, His-49, and His-64 together coordinate Cu cation. Residues Cys-58 and Cys-147 are joined by a disulfide bond. Positions 64, 72, 81, and 84 each coordinate Zn(2+). His-121 is a Cu cation binding site. A compositionally biased stretch (basic and acidic residues) spans 126-137 (DLGRGGNEESKK). Residues 126-145 (DLGRGGNEESKKTGNAGPRP) form a disordered region. A substrate-binding site is contributed by Arg-144.

Belongs to the Cu-Zn superoxide dismutase family. Homodimer. Cu cation serves as cofactor. The cofactor is Zn(2+).

It is found in the cytoplasm. The catalysed reaction is 2 superoxide + 2 H(+) = H2O2 + O2. Destroys radicals which are normally produced within the cells and which are toxic to biological systems. The chain is Superoxide dismutase [Cu-Zn] from Humicola lutea.